We begin with the raw amino-acid sequence, 357 residues long: Aminomethyltransferase (357 aa).

The protein belongs to the GcvT family. The glycine cleavage system is composed of four proteins: P, T, L and H.

It carries out the reaction N(6)-[(R)-S(8)-aminomethyldihydrolipoyl]-L-lysyl-[protein] + (6S)-5,6,7,8-tetrahydrofolate = N(6)-[(R)-dihydrolipoyl]-L-lysyl-[protein] + (6R)-5,10-methylene-5,6,7,8-tetrahydrofolate + NH4(+). In terms of biological role, the glycine cleavage system catalyzes the degradation of glycine. The protein is Aminomethyltransferase of Halothermothrix orenii (strain H 168 / OCM 544 / DSM 9562).